A 215-amino-acid chain; its full sequence is Protein FAM167A (215 aa).

Disordered stretches follow at residues 1-26 (MSVP…PPDD) and 63-109 (RPAA…LTTG). Positions 124–157 (LRKELAEMRLQDQQLARQLMRLRGDINKLKIEQT) form a coiled coil.

Belongs to the FAM167 (SEC) family.

The protein is Protein FAM167A (Fam167a) of Mus musculus (Mouse).